The chain runs to 284 residues: Bifunctional protein FolD (284 aa).

Residues 164 to 166 (GRG), Thr-189, and Ile-230 each bind NADP(+).

It belongs to the tetrahydrofolate dehydrogenase/cyclohydrolase family. As to quaternary structure, homodimer.

It carries out the reaction (6R)-5,10-methylene-5,6,7,8-tetrahydrofolate + NADP(+) = (6R)-5,10-methenyltetrahydrofolate + NADPH. The enzyme catalyses (6R)-5,10-methenyltetrahydrofolate + H2O = (6R)-10-formyltetrahydrofolate + H(+). It functions in the pathway one-carbon metabolism; tetrahydrofolate interconversion. Its function is as follows. Catalyzes the oxidation of 5,10-methylenetetrahydrofolate to 5,10-methenyltetrahydrofolate and then the hydrolysis of 5,10-methenyltetrahydrofolate to 10-formyltetrahydrofolate. The sequence is that of Bifunctional protein FolD from Pelotomaculum thermopropionicum (strain DSM 13744 / JCM 10971 / SI).